Reading from the N-terminus, the 205-residue chain is Spermatogenesis-associated protein 24 (205 aa).

The stretch at 17 to 166 (LAFDQLRDVI…QQRQSFRNHM (150 aa)) forms a coiled coil. Residues 138 to 185 (EDILNGKENEIKELQQVISQQRQSFRNHMSDFRIQKQQETYMAQVLDQ) are required for interaction with CBX5 and TBPL1. Residues 182-205 (VLDQKHKKTSGTRRARSRQCSREK) are disordered. A compositionally biased stretch (basic residues) spans 186 to 205 (KHKKTSGTRRARSRQCSREK).

It belongs to the SPATA24 family. Homodimer. Interacts with CBX3, CBX5, GMNN, GTF2B, TBPL1 and the polycomb proteins PHCF2, RNF2 and SCMH1 but not with CBX1 or PCGF2. In terms of tissue distribution, highly expressed in the testis and is mainly localized in the spermatids. Also expressed in the lung, heart, spleen and epididymis.

It localises to the cytoplasm. Its subcellular location is the nucleus. The protein localises to the nucleolus. The protein resides in the nucleoplasm. Binds DNA with high affinity but does not bind to TATA boxes. Synergises with GMNN and TBP in activation of TATA box-containing promoters and with GMNN and TBPL1 in activation of the NF1 TATA-less promoter. May play a role in cytoplasm movement and removal during spermiogenesis. The polypeptide is Spermatogenesis-associated protein 24 (Spata24) (Rattus norvegicus (Rat)).